A 283-amino-acid chain; its full sequence is MPSIRAIHWCFTLNFSGKIPEIVWTADVQYSIWQHERVNHDHLQGYIQMKKQTTLKKMKELLPGAHLEMARAPKKAIDYCQKKETAIDGPWEYGTWISTGSHKRKLMERFDEDPEEMKLEDPGLYRRCLSRVQMTKVREKNSWDYDLRPWQDELLKTIEQEPDDRTILWVYGPHGGEGKSVFAKYLTLKEGWWYTAGGKATDMLYSYSLDPTCHVCIDIPRCTKEEYINYAVIEQIKNRIIINTKYEPCTIRDDGHNVHVIVFANYLPDVTRISEDRIKIIYC.

In terms of domain architecture, CRESS-DNA virus Rep endonuclease spans 3-96; the sequence is SIRAIHWCFT…IDGPWEYGTW (94 aa). Positions 10–13 match the RCR-1 motif; that stretch reads CFTL. A divalent metal cation-binding residues include Glu36 and His42. The RCR-2 signature appears at 42 to 44; the sequence is HLQ. A Nuclear localization signal motif is present at residues 51–71; sequence KQTTLKKMKELLPGAHLEMAR. Tyr79 serves as the catalytic For DNA cleavage activity. Residues 79–82 carry the RCR-3 motif; the sequence is YCQK. Glu84 contacts a divalent metal cation. Positions 96 to 102 match the Nuclear localization signal motif; it reads WISTGSH. 172 to 180 contributes to the ATP binding site; it reads GPHGGEGKS.

The protein belongs to the nanoviridea/circoviridae replication-associated protein family. As to quaternary structure, homooligomer (Potential). Rep binds to repeated DNA motifs (iterons). Mg(2+) is required as a cofactor. Requires Mn(2+) as cofactor.

It localises to the host nucleus. It carries out the reaction ATP + H2O = ADP + phosphate + H(+). In terms of biological role, initiates and terminates the replication only of its own subviral DNA molecule. The closed circular ssDNA genome is first converted to a superhelical dsDNA. Rep binds a specific hairpin at the genome origin of replication. Introduces an endonucleolytic nick within the intergenic region of the genome, thereby initiating the rolling circle replication (RCR). Following cleavage, binds covalently to the 5'-phosphate of DNA as a tyrosyl ester. The cleavage gives rise to a free 3'-OH that serves as a primer for the cellular DNA polymerase. The polymerase synthesizes the (+) strand DNA by rolling circle mechanism. After one round of replication, a Rep-catalyzed nucleotidyl transfer reaction releases a circular single-stranded virus genome, thereby terminating the replication. Displays origin-specific DNA cleavage, nucleotidyl transferase, ATPase and helicase activities. The polypeptide is Para-Rep C10 (C10) (Milk vetch dwarf C10 alphasatellite (MVDC10A)).